Reading from the N-terminus, the 315-residue chain is Ribosomal RNA small subunit methyltransferase H (315 aa).

Residues 34–36, aspartate 53, aspartate 100, and histidine 107 contribute to the S-adenosyl-L-methionine site; that span reads GGH.

This sequence belongs to the methyltransferase superfamily. RsmH family.

It is found in the cytoplasm. It carries out the reaction cytidine(1402) in 16S rRNA + S-adenosyl-L-methionine = N(4)-methylcytidine(1402) in 16S rRNA + S-adenosyl-L-homocysteine + H(+). Specifically methylates the N4 position of cytidine in position 1402 (C1402) of 16S rRNA. The polypeptide is Ribosomal RNA small subunit methyltransferase H (Treponema denticola (strain ATCC 35405 / DSM 14222 / CIP 103919 / JCM 8153 / KCTC 15104)).